Consider the following 218-residue polypeptide: Carboxylesterase 2 (218 aa).

Residues S114, D168, and H199 each act as charge relay system in the active site.

It belongs to the AB hydrolase superfamily. AB hydrolase 2 family. As to quaternary structure, homodimer.

It catalyses the reaction a carboxylic ester + H2O = an alcohol + a carboxylate + H(+). Hydrolyzes carboxylic ester bonds with relatively broad substrate specificity. In Pseudomonas fluorescens, this protein is Carboxylesterase 2 (estB).